A 332-amino-acid chain; its full sequence is Adenosine receptor A2b (332 aa).

Residues 1–8 (MPLEAQDA) lie on the Extracellular side of the membrane. The chain crosses the membrane as a helical span at residues 9–33 (VYVALELALAALSVTGNVLVCAAVG). The Cytoplasmic segment spans residues 34 to 43 (TSSALQTPTN). A helical membrane pass occupies residues 44–67 (YFLVSLAAADVAVGLFAIPFAVTI). Residues 68–78 (SLGFCTDFHSC) are Extracellular-facing. A disulfide bond links Cys-78 and Cys-170. A helical membrane pass occupies residues 79–101 (LFLACFVLVLTQSSIFSLLAVAV). At 102–121 (DRYLAVRVPLRYKSLVTGAR) the chain is on the cytoplasmic side. A helical membrane pass occupies residues 122–144 (ARGVIAALWVLAFGIGLTPFLGW). Over 145–177 (NDRKIATNCTEPGDAATNVSCCLIRCLFENVVP) the chain is Extracellular. N-linked (GlcNAc...) asparagine glycans are attached at residues Asn-152 and Asn-162. Glu-173 lines the adenosine pocket. The helical transmembrane segment at 178–202 (MSYMVYFNFFGCVLPPLLIMLVIYV) threads the bilayer. Topologically, residues 203 to 234 (KIFLVACRQLQRTELMDHSRTVLQREIHAAKS) are cytoplasmic. Residues 235–258 (LALIVGIFALCWLPVHTINCASLF) traverse the membrane as a helical segment. Position 253 (Asn-253) interacts with adenosine. The Extracellular segment spans residues 259-266 (QPTWAKVK). A helical transmembrane segment spans residues 267-290 (PKWAINTAILLSHANSAVNPIVYA). Positions 278 and 279 each coordinate adenosine. At 291 to 332 (YRNRDFRYTFHKIISRYILCRTHILKSGEGQVGSQPTLQLGL) the chain is on the cytoplasmic side. The S-palmitoyl cysteine moiety is linked to residue Cys-310.

This sequence belongs to the G-protein coupled receptor 1 family.

The protein resides in the cell membrane. Functionally, receptor for adenosine. The activity of this receptor is mediated by G proteins which activate adenylyl cyclase. The sequence is that of Adenosine receptor A2b (ADORA2B) from Bos taurus (Bovine).